Here is a 387-residue protein sequence, read N- to C-terminus: Erythronate-4-phosphate dehydrogenase (387 aa).

The substrate site is built by serine 45 and threonine 67. Residue aspartate 147 participates in NAD(+) binding. Arginine 208 is an active-site residue. Aspartate 232 contacts NAD(+). Residue glutamate 237 is part of the active site. Histidine 254 acts as the Proton donor in catalysis. Residue glycine 257 participates in NAD(+) binding. Tyrosine 258 provides a ligand contact to substrate.

This sequence belongs to the D-isomer specific 2-hydroxyacid dehydrogenase family. PdxB subfamily. Homodimer.

It localises to the cytoplasm. The enzyme catalyses 4-phospho-D-erythronate + NAD(+) = (R)-3-hydroxy-2-oxo-4-phosphooxybutanoate + NADH + H(+). The protein operates within cofactor biosynthesis; pyridoxine 5'-phosphate biosynthesis; pyridoxine 5'-phosphate from D-erythrose 4-phosphate: step 2/5. Catalyzes the oxidation of erythronate-4-phosphate to 3-hydroxy-2-oxo-4-phosphonooxybutanoate. The chain is Erythronate-4-phosphate dehydrogenase from Shewanella sediminis (strain HAW-EB3).